The sequence spans 495 residues: UDP-N-acetylmuramoyl-L-alanyl-D-glutamate--2,6-diaminopimelate ligase (495 aa).

Residues Leu27, Ser29, and His44–Ala46 contribute to the UDP-N-acetyl-alpha-D-muramoyl-L-alanyl-D-glutamate site. Gly116–Thr122 provides a ligand contact to ATP. Residues Asn157, Thr158–Thr159, Ser185, Gln191, and Arg193 each bind UDP-N-acetyl-alpha-D-muramoyl-L-alanyl-D-glutamate. The residue at position 225 (Lys225) is an N6-carboxylysine. Meso-2,6-diaminopimelate is bound by residues Arg390, Asp414 to Arg417, Gly465, and Glu469. Positions Asp414–Arg417 match the Meso-diaminopimelate recognition motif motif.

It belongs to the MurCDEF family. MurE subfamily. Mg(2+) serves as cofactor. Post-translationally, carboxylation is probably crucial for Mg(2+) binding and, consequently, for the gamma-phosphate positioning of ATP.

It is found in the cytoplasm. The enzyme catalyses UDP-N-acetyl-alpha-D-muramoyl-L-alanyl-D-glutamate + meso-2,6-diaminopimelate + ATP = UDP-N-acetyl-alpha-D-muramoyl-L-alanyl-gamma-D-glutamyl-meso-2,6-diaminopimelate + ADP + phosphate + H(+). It functions in the pathway cell wall biogenesis; peptidoglycan biosynthesis. Functionally, catalyzes the addition of meso-diaminopimelic acid to the nucleotide precursor UDP-N-acetylmuramoyl-L-alanyl-D-glutamate (UMAG) in the biosynthesis of bacterial cell-wall peptidoglycan. The polypeptide is UDP-N-acetylmuramoyl-L-alanyl-D-glutamate--2,6-diaminopimelate ligase (Shigella flexneri).